Consider the following 758-residue polypeptide: Meiotic driver SPOK4 (758 aa).

The stretch at 4-41 forms a coiled coil; it reads KDRITQLLRKLEEAKAREEEAKAREAQERCEKERLQLE. Disordered regions lie at residues 180 to 230 and 414 to 499; these read ELTQ…GVGI and LSSA…MADP. Basic and acidic residues predominate over residues 181–190; it reads LTQEDDRSSG. A compositionally biased stretch (polar residues) spans 416–429; it reads SAASSQNTENSEYT. The segment covering 457–468 has biased composition (basic and acidic residues); that stretch reads NEHDEHDEDHSE.

The protein localises to the cytoplasm. The protein resides in the nucleus. Functionally, promotes unequal transmission of alleles from the parental zygote to progeny spores by acting as poison/antidote system, leading to poisoning of progeny that do not inherit the allele. May possess DNA nuclease activity that leads to spore killing, and a kinase activity that confers resistance to the nuclease activity. Can suppress meiotic drive by the P.comata SPOK1 protein. This chain is Meiotic driver SPOK4, found in Podospora anserina (Pleurage anserina).